A 245-amino-acid chain; its full sequence is Probable phosphatase NT01EI_1577 (245 aa).

Zn(2+) contacts are provided by histidine 7, histidine 9, histidine 15, histidine 40, glutamate 73, histidine 101, histidine 131, aspartate 192, and histidine 194.

It belongs to the PHP family. As to quaternary structure, homotrimer. It depends on Zn(2+) as a cofactor.

The sequence is that of Probable phosphatase NT01EI_1577 from Edwardsiella ictaluri (strain 93-146).